A 545-amino-acid chain; its full sequence is Tripartite motif-containing protein 26 (545 aa).

An RING-type zinc finger spans residues 16–57; the sequence is CSICLDYLRDPVTIDCGHVFCRSCTSDIRPISGNRPVCPLCK. A B box-type zinc finger spans residues 97–138; sequence QDMKLCERHQEKLHYYCEDDGKLLCVMCRESREHRPHTAVLV. 4 residues coordinate Zn(2+): C102, H105, C124, and H130. Residues 197–243 are a coiled coil; the sequence is QFLKKREQHLLDQLATLEQLLTEGREKFKTRGVSELDRLTLVISELE. In terms of domain architecture, B30.2/SPRY spans 301 to 545; it reads RGLRQFQGKL…WPGARLLLRP (245 aa). The disordered stretch occupies residues 382 to 443; that stretch reads REGWSEDEEE…EEEEEVQESC (62 aa). Residues 386 to 440 show a composition bias toward acidic residues; the sequence is SEDEEEGEEEEEGEEEEEDEEVGYGDGYEDWETDEEDESLGEEEEEEEEEEEEVQ.

The protein belongs to the TRIM/RBCC family. Interacts with TBK1; this interaction bridges together TBK1 and NEMO in order to activate TBK1. Interacts with INCA1. Post-translationally, autoubiquitinates upon viral infection. In turn, autoubiquitinated TRIM26 recruits NEMO and bridges TBK1-NEMO interaction.

Its subcellular location is the cytoplasm. It is found in the nucleus. The enzyme catalyses S-ubiquitinyl-[E2 ubiquitin-conjugating enzyme]-L-cysteine + [acceptor protein]-L-lysine = [E2 ubiquitin-conjugating enzyme]-L-cysteine + N(6)-ubiquitinyl-[acceptor protein]-L-lysine.. In terms of biological role, E3 ubiquitin-protein ligase which regulates the IFN-beta production and antiviral response downstream of various DNA-encoded pattern-recognition receptors (PRRs). Also plays a central role in determining the response to different forms of oxidative stress by controlling levels of DNA glycosylases NEIL1, NEIL3 and NTH1 that are involved in repair of damaged DNA. Promotes nuclear IRF3 ubiquitination and proteasomal degradation. Bridges together TBK1 and NEMO during the innate response to viral infection leading to the activation of TBK1. Positively regulates LPS-mediated inflammatory innate immune response by catalyzing the 'Lys-11'-linked polyubiquitination of TAB1 to enhance its activation and subsequent NF-kappa-B and MAPK signaling. In a manner independent of its catalytic activity, inhibits WWP2, a SOX2-directed E3 ubiquitin ligase, and thus protects SOX2 from polyubiquitination and proteasomal degradation. Ubiquitinates the histone acetyltransferase protein complex component PHF20 and thereby triggers its degradation in the nucleus after its recruitment by the histone demethylase KDM6B, serving as a scaffold protein. Upon induction by TGF-beta, ubiquitinates the TFIID component TAF7 for proteasomal degradation. Induces ferroptosis by ubiquitinating SLC7A11, a critical protein for lipid reactive oxygen species (ROS) scavenging. The polypeptide is Tripartite motif-containing protein 26 (Trim26) (Mus musculus (Mouse)).